Here is a 222-residue protein sequence, read N- to C-terminus: Nudix hydrolase 11 (222 aa).

Residues 31-175 form the Nudix hydrolase domain; that stretch reads AKSSAVLVCL…EGERYLLQYF (145 aa). The Nudix box motif lies at 73-96; sequence GGKRDQEDKDDIATALREAREEIG. Mg(2+) is bound by residues Glu-90 and Glu-94. A helical membrane pass occupies residues 186–204; that stretch reads FIIWALTAGILIRVASIVY.

This sequence belongs to the Nudix hydrolase family. PCD1 subfamily. Mn(2+) serves as cofactor. Mg(2+) is required as a cofactor. Expressed in roots, stems and leaves.

Its subcellular location is the peroxisome membrane. Functionally, coenzyme A diphosphatase which mediates the cleavage of CoA into 3',5'-ADP from CoA and 4'-phosphopantetheine. Can use malonyl-CoA, hexanoyl-CoA, lauroyl-CoA, myristoyl-CoA and palmitoyl-CoA as substrates, but not isobutyryl-CoA or propionyl-CoA. The protein is Nudix hydrolase 11 (NUDT11) of Arabidopsis thaliana (Mouse-ear cress).